The primary structure comprises 210 residues: Urease accessory protein UreF (210 aa).

This sequence belongs to the UreF family. In terms of assembly, ureD, UreF and UreG form a complex that acts as a GTP-hydrolysis-dependent molecular chaperone, activating the urease apoprotein by helping to assemble the nickel containing metallocenter of UreC. The UreE protein probably delivers the nickel.

It localises to the cytoplasm. Functionally, required for maturation of urease via the functional incorporation of the urease nickel metallocenter. This is Urease accessory protein UreF from Dinoroseobacter shibae (strain DSM 16493 / NCIMB 14021 / DFL 12).